A 683-amino-acid chain; its full sequence is Cysteine-rich receptor-like protein kinase 28 (683 aa).

An N-terminal signal peptide occupies residues 1–24; it reads MEHVRVIFFFFACVLKIVPFICLA. The Extracellular portion of the chain corresponds to 25–288; the sequence is QKDKYEFPPG…RTGKGKGGSK (264 aa). 2 Gnk2-homologous domains span residues 32–136 and 142–251; these read PPGF…NMII and TTPT…TWRF. N-linked (GlcNAc...) asparagine glycosylation is found at Asn-43, Asn-47, Asn-73, and Asn-153. The interval 263–283 is disordered; the sequence is PAIQPADSPTSAARTERTGKG. Residues 289 to 309 form a helical membrane-spanning segment; the sequence is VIVAIVIPIVFVALFAICLCL. The Cytoplasmic portion of the chain corresponds to 310–683; the sequence is LLKWKKNKSV…DVTVSELSPR (374 aa). Positions 361–641 constitute a Protein kinase domain; sequence FSPENELGRG…ALMLNSYSYT (281 aa). ATP is bound by residues 367 to 375 and Lys-389; that span reads LGRGGFGSV. A Phosphotyrosine modification is found at Tyr-434. Asp-486 (proton acceptor) is an active-site residue. Residue Ser-490 is modified to Phosphoserine. Thr-528 bears the Phosphothreonine mark. Position 536 is a phosphotyrosine (Tyr-536).

It belongs to the protein kinase superfamily. Ser/Thr protein kinase family. CRK subfamily.

The protein resides in the membrane. The enzyme catalyses L-seryl-[protein] + ATP = O-phospho-L-seryl-[protein] + ADP + H(+). The catalysed reaction is L-threonyl-[protein] + ATP = O-phospho-L-threonyl-[protein] + ADP + H(+). The sequence is that of Cysteine-rich receptor-like protein kinase 28 (CRK28) from Arabidopsis thaliana (Mouse-ear cress).